The primary structure comprises 344 residues: tRNA N6-adenosine threonylcarbamoyltransferase (344 aa).

The Fe cation site is built by H111 and H115. Substrate contacts are provided by residues 133–137, D166, G179, and N283; that span reads LVSGG. A Fe cation-binding site is contributed by D311.

This sequence belongs to the KAE1 / TsaD family. Fe(2+) serves as cofactor.

The protein localises to the cytoplasm. The catalysed reaction is L-threonylcarbamoyladenylate + adenosine(37) in tRNA = N(6)-L-threonylcarbamoyladenosine(37) in tRNA + AMP + H(+). Its function is as follows. Required for the formation of a threonylcarbamoyl group on adenosine at position 37 (t(6)A37) in tRNAs that read codons beginning with adenine. Is involved in the transfer of the threonylcarbamoyl moiety of threonylcarbamoyl-AMP (TC-AMP) to the N6 group of A37, together with TsaE and TsaB. TsaD likely plays a direct catalytic role in this reaction. This Orientia tsutsugamushi (strain Boryong) (Rickettsia tsutsugamushi) protein is tRNA N6-adenosine threonylcarbamoyltransferase.